Here is a 131-residue protein sequence, read N- to C-terminus: Profilin-2 (131 aa).

The cysteines at positions 13 and 115 are disulfide-linked. The Involved in PIP2 interaction signature appears at 81-97; that stretch reads AVIRGKKGAGGITIKKT. Thr111 bears the Phosphothreonine mark.

This sequence belongs to the profilin family. Occurs in many kinds of cells as a complex with monomeric actin in a 1:1 ratio. Phosphorylated by MAP kinases.

Its subcellular location is the cytoplasm. The protein localises to the cytoskeleton. Functionally, binds to actin and affects the structure of the cytoskeleton. At high concentrations, profilin prevents the polymerization of actin, whereas it enhances it at low concentrations. By binding to PIP2, it inhibits the formation of IP3 and DG. In Phleum pratense (Common timothy), this protein is Profilin-2 (PRO2).